The chain runs to 441 residues: Arginine biosynthesis bifunctional protein ArgJ, mitochondrial (441 aa).

The substrate site is built by Thr177, Lys204, Thr215, Glu301, Asn436, and Ser441. The active-site Nucleophile is Thr215.

Belongs to the ArgJ family. As to quaternary structure, heterodimer of an alpha and a beta chain. Post-translationally, the alpha and beta chains are autoproteolytically processed from a single precursor protein within the mitochondrion.

The protein localises to the mitochondrion matrix. The enzyme catalyses N(2)-acetyl-L-ornithine + L-glutamate = N-acetyl-L-glutamate + L-ornithine. It carries out the reaction L-glutamate + acetyl-CoA = N-acetyl-L-glutamate + CoA + H(+). It participates in amino-acid biosynthesis; L-arginine biosynthesis; L-ornithine and N-acetyl-L-glutamate from L-glutamate and N(2)-acetyl-L-ornithine (cyclic): step 1/1. The protein operates within amino-acid biosynthesis; L-arginine biosynthesis; N(2)-acetyl-L-ornithine from L-glutamate: step 1/4. Its function is as follows. Catalyzes two activities which are involved in the cyclic version of arginine biosynthesis: the synthesis of acetylglutamate from glutamate and acetyl-CoA, and of ornithine by transacetylation between acetylornithine and glutamate. The chain is Arginine biosynthesis bifunctional protein ArgJ, mitochondrial from Candida glabrata (strain ATCC 2001 / BCRC 20586 / JCM 3761 / NBRC 0622 / NRRL Y-65 / CBS 138) (Yeast).